The primary structure comprises 216 residues: Protein-L-isoaspartate O-methyltransferase (216 aa).

Ser-65 is an active-site residue.

The protein belongs to the methyltransferase superfamily. L-isoaspartyl/D-aspartyl protein methyltransferase family.

Its subcellular location is the cytoplasm. It carries out the reaction [protein]-L-isoaspartate + S-adenosyl-L-methionine = [protein]-L-isoaspartate alpha-methyl ester + S-adenosyl-L-homocysteine. In terms of biological role, catalyzes the methyl esterification of L-isoaspartyl residues in peptides and proteins that result from spontaneous decomposition of normal L-aspartyl and L-asparaginyl residues. It plays a role in the repair and/or degradation of damaged proteins. The protein is Protein-L-isoaspartate O-methyltransferase of Chlorobium phaeobacteroides (strain DSM 266 / SMG 266 / 2430).